Reading from the N-terminus, the 544-residue chain is MDSQRNLLLIALLFVTFMLWQAWETDKNPPATTQTIQQATNAVTGDATNQGVPASGQGKLITVKTDVLSLTINTRGGDVEQAHLLAYPDILGSDKPFHLLETTSAFVYQAQSGLTGKNGPDNPANGSRPLFVTTQDSFELADGQSELRIPMTYTAADGVTYTKTFVLKRGDYALNVDYSVNNTSAQPLELTLFGQLKQSIDLPKHRDTGSNNFALHTYRGAAFSSSEDKYKKYSFSDMDEGLNITTNSGWVAMLQQYFATAWIPTTAGANTFYTSKLGNGQAAIGFKAAPVIIAAGSQQNLNATLWVGPEIQDKMAAVAPHLDLTVDYGWLWFISQPLFKLLKFLHGFIGNWGFSIIAITFIVRGVMYPLTKAQYTSMAKMRLLQPKLQAMRERIGDDKQRMSQEMMALYKSEKVNPLGGCLPLVIQMPIFLALYYMLMGSVELRHAPFALWIHDLSAQDPYYILPILMGVTMFFIQKMSPTTVTDPMQQKIMTYMPVIFTVFFLWFPSGLVMYYIVSNLVTILQQQLIYRGLEKRGLHSREKK.

5 helical membrane-spanning segments follow: residues 6–26 (NLLL…WETD), 343–363 (KFLH…TFIV), 418–438 (LGGC…YYML), 456–476 (LSAQ…MFFI), and 497–517 (PVIF…YYIV).

The protein belongs to the OXA1/ALB3/YidC family. Type 1 subfamily. Interacts with the Sec translocase complex via SecD. Specifically interacts with transmembrane segments of nascent integral membrane proteins during membrane integration.

The protein localises to the cell inner membrane. Functionally, required for the insertion and/or proper folding and/or complex formation of integral membrane proteins into the membrane. Involved in integration of membrane proteins that insert both dependently and independently of the Sec translocase complex, as well as at least some lipoproteins. Aids folding of multispanning membrane proteins. This Pectobacterium atrosepticum (strain SCRI 1043 / ATCC BAA-672) (Erwinia carotovora subsp. atroseptica) protein is Membrane protein insertase YidC.